A 389-amino-acid chain; its full sequence is Major outer membrane porin (389 aa).

The first 23 residues, 1-23 (MKKLLKSALLSAAFAGSVGSLQA), serve as a signal peptide directing secretion.

This sequence belongs to the chlamydial porin (CP) (TC 1.B.2) family. Part of a disulfide cross-linked outer membrane complex (COMC) composed of the major outer membrane porin (MOMP), the small cysteine-rich protein (OmcA) and the large cysteine-rich periplasmic protein (OmcB).

Its subcellular location is the cell outer membrane. In elementary bodies (EBs, the infectious stage, which is able to survive outside the host cell) provides the structural integrity of the outer envelope through disulfide cross-links with the small cysteine-rich protein and the large cysteine-rich periplasmic protein. It has been described in publications as the Sarkosyl-insoluble COMC (Chlamydia outer membrane complex), and serves as the functional equivalent of peptidoglycan. Functionally, permits diffusion of specific solutes through the outer membrane. The sequence is that of Major outer membrane porin (ompA) from Chlamydia pneumoniae (Chlamydophila pneumoniae).